Reading from the N-terminus, the 296-residue chain is Urease accessory protein UreD (296 aa).

Belongs to the UreD family. UreD, UreF and UreG form a complex that acts as a GTP-hydrolysis-dependent molecular chaperone, activating the urease apoprotein by helping to assemble the nickel containing metallocenter of UreC. The UreE protein probably delivers the nickel.

The protein resides in the cytoplasm. Its function is as follows. Required for maturation of urease via the functional incorporation of the urease nickel metallocenter. The protein is Urease accessory protein UreD of Methylibium petroleiphilum (strain ATCC BAA-1232 / LMG 22953 / PM1).